We begin with the raw amino-acid sequence, 139 residues long: GSK3B-interacting protein (139 aa).

The tract at residues 1 to 22 (METDCNPMELSSMSGFEEGSEL) is disordered. Positions 41 to 45 (VNDVL) are required for PRKAR2A interaction; contributes to a protective effect against H(2)O(2)-induced apoptosis. The tract at residues 115–139 (SPAYREAFGNALLQRLEALKRDGQS) is interaction with GSK3B and acts as a GSK3B inhibitor.

It belongs to the GSKIP family. As to quaternary structure, forms a complex composed of PRKAR2A or PRKAR2B, GSK3B and GSKIP through GSKIP interaction; facilitates PKA-induced phosphorylation of GSK3B leading to GSK3B inactivation; recruits DNM1L through GSK3B for PKA-mediated phosphorylation of DNM1L; promotes beta-catenin degradation through GSK3B-induced phosphorylation of beta-catenin; stabilizes beta-catenin and enhances Wnt-induced signaling through PKA-induced phosphorylation of beta-catenin. Interacts with GSK3B; induces GSK3B-mediated phosphorylation of GSKIP and inhibits GSK3B kinase activity. In terms of processing, phosphorylated by GSK3B. As to expression, detected in heart, brain, placenta, liver, skeletal muscle, kidney, testis, lung and pancreas.

The protein localises to the cytoplasm. The protein resides in the nucleus. A-kinase anchoring protein for GSK3B and PKA that regulates or facilitates their kinase activity towards their targets. The ternary complex enhances Wnt-induced signaling by facilitating the GSK3B- and PKA-induced phosphorylation of beta-catenin leading to beta-catenin degradation and stabilization respectively. Upon cAMP activation, the ternary complex contributes to neuroprotection against oxidative stress-induced apoptosis by facilitating the PKA-induced phosphorylation of DML1 and PKA-induced inactivation of GSK3B. During neurite outgrowth promotes neuron proliferation; while increases beta-catenin-induced transcriptional activity through GSK3B kinase activity inhibition, reduces N-cadherin level to promote cell cycle progression. In Homo sapiens (Human), this protein is GSK3B-interacting protein.